We begin with the raw amino-acid sequence, 156 residues long: Small ribosomal subunit protein uS7 (156 aa).

The protein belongs to the universal ribosomal protein uS7 family. In terms of assembly, part of the 30S ribosomal subunit. Contacts proteins S9 and S11.

Functionally, one of the primary rRNA binding proteins, it binds directly to 16S rRNA where it nucleates assembly of the head domain of the 30S subunit. Is located at the subunit interface close to the decoding center, probably blocks exit of the E-site tRNA. This Gemmatimonas aurantiaca (strain DSM 14586 / JCM 11422 / NBRC 100505 / T-27) protein is Small ribosomal subunit protein uS7.